The primary structure comprises 59 residues: Large ribosomal subunit protein uL30 (59 aa).

The protein belongs to the universal ribosomal protein uL30 family. As to quaternary structure, part of the 50S ribosomal subunit.

The protein is Large ribosomal subunit protein uL30 of Rhodococcus jostii (strain RHA1).